The chain runs to 118 residues: Large ribosomal subunit protein bL20 (118 aa).

It belongs to the bacterial ribosomal protein bL20 family.

Its function is as follows. Binds directly to 23S ribosomal RNA and is necessary for the in vitro assembly process of the 50S ribosomal subunit. It is not involved in the protein synthesizing functions of that subunit. The chain is Large ribosomal subunit protein bL20 from Agathobacter rectalis (strain ATCC 33656 / DSM 3377 / JCM 17463 / KCTC 5835 / VPI 0990) (Eubacterium rectale).